A 138-amino-acid polypeptide reads, in one-letter code: Centromere protein S (138 aa).

Met-1 is subject to N-acetylmethionine. Positions 112–138 are disordered; the sequence is AKKKKKLEDENRNSVESAEAGVEESEN.

This sequence belongs to the TAF9 family. CENP-S/MHF1 subfamily. In terms of assembly, heterodimer with CENPX, sometimes called MHF; this interaction stabilizes both partners. MHF heterodimers can assemble to form tetrameric structures. MHF also coassemble with CENPT-CENPW heterodimers at centromeres to form the tetrameric CENP-T-W-S-X complex. Forms a discrete complex with FANCM and CENPX, called FANCM-MHF; this interaction, probably mediated by direct binding between CENPS and FANCM, leads to synergistic activation of double-stranded DNA binding and strongly stimulates FANCM-mediated DNA remodeling. Recruited by FANCM to the Fanconi anemia (FA) core complex, which consists of CENPS, CENPX, FANCA, FANCB, FANCC, FANCE, FANCF, FANCG, FANCL, FANCM, FAAP24 and FAAP100. The FA core complex associates with Bloom syndrome (BLM) complex, which consists of at least BLM, DNA topoisomerase 3-alpha (TOP3A), RMI1/BLAP75, RPA1/RPA70 and RPA2/RPA32. The super complex between FA and BLM is called BRAFT. Component of the CENPA-CAD complex, composed of CENPI, CENPK, CENPL, CENPO, CENPP, CENPQ, CENPR and CENPS. The CENPA-CAD complex is probably recruited on centromeres by the CENPA-NAC complex, at least composed of CENPA, CENPC, CENPH, CENPM, CENPN, CENPT and CENPU.

Its subcellular location is the nucleus. The protein resides in the chromosome. It is found in the centromere. The protein localises to the kinetochore. In terms of biological role, DNA-binding component of the Fanconi anemia (FA) core complex. Required for the normal activation of the FA pathway, leading to monoubiquitination of the FANCI-FANCD2 complex in response to DNA damage, cellular resistance to DNA cross-linking drugs, and prevention of chromosomal breakage. In complex with CENPX (MHF heterodimer), crucial cofactor for FANCM in both binding and ATP-dependent remodeling of DNA. Stabilizes FANCM. In complex with CENPX and FANCM (but not other FANC proteins), rapidly recruited to blocked forks and promotes gene conversion at blocked replication forks. In complex with CENPT, CENPW and CENPX (CENP-T-W-S-X heterotetramer), involved in the formation of a functional kinetochore outer plate, which is essential for kinetochore-microtubule attachment and faithful mitotic progression. As a component of MHF and CENP-T-W-S-X complexes, binds DNA and bends it to form a nucleosome-like structure. DNA-binding function is fulfilled in the presence of CENPX, with the following preference for DNA substates: Holliday junction &gt; double-stranded &gt; splay arm &gt; single-stranded. Does not bind DNA on its own. This Bos taurus (Bovine) protein is Centromere protein S (CENPS).